Reading from the N-terminus, the 503-residue chain is MHSLSSALAGSTFVLLFLCLLASAQPLTTPNPARALPDALTGGSSIFSCPAASWPPTRIGSPNRPQRPSRELRSILSQISHKRIEASILKLVSFGTRHTLSTQTNATHGIGAARDWIASEFKRYADASDGRLSVDVIGYEQQPDGNRIPFPVRISDVVATLKGTEEPERIYLISGHYDSRVTDVNDYTSFAPGANDDASGVAVSLELARVMSQPHFPRPRATLVFAAVAGEEQGLYGSRFLAETYRNKSANIEGMFTNDIVGSSTADDGTRDPHVVRLFGQGLPPLTVEDQKQRETRLTIGGENDTPARQLSRFVKETAENEHTDMRVSVIYRLDRYLRGGDHRPFLEAGYPAARFTEPHENFAHQHQDVRVETDPKTGRKKQYGDLPEFCDFRYIARVGKVNAAALWSLANSPGMPRNVRVSTRDLSNDSKFFWDPPVGGNEGVGGYEIVWRSTVAPFWTHVLDVGMAREATVDLSKDNVIFGIRARGKNGERGVAVLPFPA.

Residues 1–24 form the signal peptide; that stretch reads MHSLSSALAGSTFVLLFLCLLASA. A glycan (N-linked (GlcNAc...) asparagine) is linked at asparagine 105. Zn(2+)-binding residues include histidine 176, aspartate 196, and glutamate 232. Asparagine 247 is a glycosylation site (N-linked (GlcNAc...) asparagine). Aspartate 259 contributes to the Zn(2+) binding site. Residues 416–503 enclose the Fibronectin type-III domain; that stretch reads MPRNVRVSTR…RGVAVLPFPA (88 aa). Asparagine 429 carries N-linked (GlcNAc...) asparagine glycosylation.

The protein belongs to the peptidase M28 family. M28B subfamily. It depends on Zn(2+) as a cofactor.

The protein localises to the secreted. The protein is Probable zinc metalloprotease UREG_01421 of Uncinocarpus reesii (strain UAMH 1704).